The primary structure comprises 144 residues: Succinate dehydrogenase cytochrome b560 subunit (144 aa).

3 consecutive transmembrane segments (helical) span residues 40-60 (IFHR…ILIL), 84-104 (GFLF…HLFA), and 124-144 (LTGY…WIIF). H101 is a binding site for heme.

The protein belongs to the cytochrome b560 family. Forms part of complex II containing four subunits: a 70 kDa flavoprotein (FP), a 27 kDa iron-sulfur protein (IP), a cytochrome B and a membrane-anchoring protein. It depends on heme as a cofactor.

It localises to the mitochondrion inner membrane. It participates in carbohydrate metabolism; tricarboxylic acid cycle. Functionally, membrane-anchoring subunit of succinate dehydrogenase (SDH) that is involved in complex II of the mitochondrial electron transport chain and is responsible for transferring electrons from succinate to ubiquinone (coenzyme Q). The protein is Succinate dehydrogenase cytochrome b560 subunit (SDH3) of Reclinomonas americana.